A 136-amino-acid chain; its full sequence is Large ribosomal subunit protein eL27 (136 aa).

In terms of domain architecture, KOW spans 5–40; the sequence is MKPGKVVMVLAGRYAGRKAVIVKNIDDGTADRPYSH.

Belongs to the eukaryotic ribosomal protein eL27 family. In terms of assembly, component of the large ribosomal subunit.

It localises to the cytoplasm. The protein resides in the cytosol. It is found in the rough endoplasmic reticulum. In terms of biological role, component of the large ribosomal subunit. The sequence is that of Large ribosomal subunit protein eL27 (rpl27) from Danio rerio (Zebrafish).